The primary structure comprises 733 residues: Phosphoribosylformylglycinamidine synthase subunit PurL (733 aa).

His-44 is a catalytic residue. 2 residues coordinate ATP: Tyr-47 and Lys-86. A Mg(2+)-binding site is contributed by Glu-88. Residues 89-92 and Arg-111 contribute to the substrate site; that span reads SHNH. His-90 acts as the Proton acceptor in catalysis. Residue Asp-112 participates in Mg(2+) binding. Position 240 (Gln-240) interacts with substrate. Residue Asp-268 coordinates Mg(2+). Substrate is bound at residue 312 to 314; that stretch reads ESQ. ATP-binding residues include Asp-496 and Gly-533. Mg(2+) is bound at residue Asn-534. Ser-536 serves as a coordination point for substrate.

It belongs to the FGAMS family. In terms of assembly, monomer. Part of the FGAM synthase complex composed of 1 PurL, 1 PurQ and 2 PurS subunits.

It localises to the cytoplasm. It carries out the reaction N(2)-formyl-N(1)-(5-phospho-beta-D-ribosyl)glycinamide + L-glutamine + ATP + H2O = 2-formamido-N(1)-(5-O-phospho-beta-D-ribosyl)acetamidine + L-glutamate + ADP + phosphate + H(+). It functions in the pathway purine metabolism; IMP biosynthesis via de novo pathway; 5-amino-1-(5-phospho-D-ribosyl)imidazole from N(2)-formyl-N(1)-(5-phospho-D-ribosyl)glycinamide: step 1/2. In terms of biological role, part of the phosphoribosylformylglycinamidine synthase complex involved in the purines biosynthetic pathway. Catalyzes the ATP-dependent conversion of formylglycinamide ribonucleotide (FGAR) and glutamine to yield formylglycinamidine ribonucleotide (FGAM) and glutamate. The FGAM synthase complex is composed of three subunits. PurQ produces an ammonia molecule by converting glutamine to glutamate. PurL transfers the ammonia molecule to FGAR to form FGAM in an ATP-dependent manner. PurS interacts with PurQ and PurL and is thought to assist in the transfer of the ammonia molecule from PurQ to PurL. This Wolinella succinogenes (strain ATCC 29543 / DSM 1740 / CCUG 13145 / JCM 31913 / LMG 7466 / NCTC 11488 / FDC 602W) (Vibrio succinogenes) protein is Phosphoribosylformylglycinamidine synthase subunit PurL.